A 345-amino-acid chain; its full sequence is Phenylalanine--tRNA ligase alpha subunit (345 aa).

A Mg(2+)-binding site is contributed by glutamate 266.

The protein belongs to the class-II aminoacyl-tRNA synthetase family. Phe-tRNA synthetase alpha subunit type 1 subfamily. In terms of assembly, tetramer of two alpha and two beta subunits. The cofactor is Mg(2+).

It is found in the cytoplasm. It carries out the reaction tRNA(Phe) + L-phenylalanine + ATP = L-phenylalanyl-tRNA(Phe) + AMP + diphosphate + H(+). In Burkholderia lata (strain ATCC 17760 / DSM 23089 / LMG 22485 / NCIMB 9086 / R18194 / 383), this protein is Phenylalanine--tRNA ligase alpha subunit.